We begin with the raw amino-acid sequence, 108 residues long: Succinate dehydrogenase assembly factor 4, mitochondrial (108 aa).

Residues 1 to 20 constitute a mitochondrion transit peptide; that stretch reads MTPSRLPWLLSWVSATAWRA. The interval 31-108 is disordered; it reads RKTSSSQGGK…WERKGRCIDF (78 aa). 2 stretches are compositionally biased toward basic and acidic residues: residues 52–87 and 95–108; these read KLPEGRFDAPEDSHLEKEPLEKFPDDVNPVTKEKGG and RYGDWERKGRCIDF.

The protein belongs to the SDHAF4 family. Interacts with SDHA in its FAD-bound form.

Its subcellular location is the mitochondrion matrix. In terms of biological role, plays an essential role in the assembly of succinate dehydrogenase (SDH), an enzyme complex (also referred to as respiratory complex II) that is a component of both the tricarboxylic acid (TCA) cycle and the mitochondrial electron transport chain, and which couples the oxidation of succinate to fumarate with the reduction of ubiquinone (coenzyme Q) to ubiquinol. Binds to the flavoprotein subunit SDHA in its FAD-bound form, blocking the generation of excess reactive oxygen species (ROS) and facilitating its assembly with the iron-sulfur protein subunit SDHB into the SDH catalytic dimer. This Homo sapiens (Human) protein is Succinate dehydrogenase assembly factor 4, mitochondrial.